The primary structure comprises 89 residues: Small ribosomal subunit protein uS15 (89 aa).

The span at 1-11 (MSITAERKAEV) shows a compositional bias: basic and acidic residues. The interval 1–24 (MSITAERKAEVIKTNAKKAGDTGS) is disordered.

This sequence belongs to the universal ribosomal protein uS15 family. In terms of assembly, part of the 30S ribosomal subunit. Forms a bridge to the 50S subunit in the 70S ribosome, contacting the 23S rRNA.

In terms of biological role, one of the primary rRNA binding proteins, it binds directly to 16S rRNA where it helps nucleate assembly of the platform of the 30S subunit by binding and bridging several RNA helices of the 16S rRNA. Functionally, forms an intersubunit bridge (bridge B4) with the 23S rRNA of the 50S subunit in the ribosome. The polypeptide is Small ribosomal subunit protein uS15 (Afipia carboxidovorans (strain ATCC 49405 / DSM 1227 / KCTC 32145 / OM5) (Oligotropha carboxidovorans)).